Here is a 1175-residue protein sequence, read N- to C-terminus: DNA-directed RNA polymerase subunit beta (1175 aa).

A disordered region spans residues 1142–1175 (PMELSGSDDDEFDQAGASLGINLSRDERSDADIA). Over residues 1165–1175 (SRDERSDADIA) the composition is skewed to basic and acidic residues.

It belongs to the RNA polymerase beta chain family. The RNAP catalytic core consists of 2 alpha, 1 beta, 1 beta' and 1 omega subunit. When a sigma factor is associated with the core the holoenzyme is formed, which can initiate transcription.

The enzyme catalyses RNA(n) + a ribonucleoside 5'-triphosphate = RNA(n+1) + diphosphate. Functionally, DNA-dependent RNA polymerase catalyzes the transcription of DNA into RNA using the four ribonucleoside triphosphates as substrates. The protein is DNA-directed RNA polymerase subunit beta of Corynebacterium diphtheriae (strain ATCC 700971 / NCTC 13129 / Biotype gravis).